Here is a 633-residue protein sequence, read N- to C-terminus: Threonine--tRNA ligase (633 aa).

A TGS domain is found at 1 to 61; that stretch reads MINITLPDGS…DHDASLRIIT (61 aa). The tract at residues 243 to 534 is catalytic; sequence DHRRIGKQQD…LIEHHAGQFP (292 aa). 3 residues coordinate Zn(2+): C334, H385, and H511.

This sequence belongs to the class-II aminoacyl-tRNA synthetase family. In terms of assembly, homodimer. Requires Zn(2+) as cofactor.

The protein localises to the cytoplasm. The enzyme catalyses tRNA(Thr) + L-threonine + ATP = L-threonyl-tRNA(Thr) + AMP + diphosphate + H(+). Functionally, catalyzes the attachment of threonine to tRNA(Thr) in a two-step reaction: L-threonine is first activated by ATP to form Thr-AMP and then transferred to the acceptor end of tRNA(Thr). Also edits incorrectly charged L-seryl-tRNA(Thr). The protein is Threonine--tRNA ligase of Stenotrophomonas maltophilia (strain R551-3).